Here is a 103-residue protein sequence, read N- to C-terminus: Large ribosomal subunit protein uL24 (103 aa).

It belongs to the universal ribosomal protein uL24 family. In terms of assembly, part of the 50S ribosomal subunit.

Functionally, one of two assembly initiator proteins, it binds directly to the 5'-end of the 23S rRNA, where it nucleates assembly of the 50S subunit. In terms of biological role, one of the proteins that surrounds the polypeptide exit tunnel on the outside of the subunit. This Bacillus mycoides (strain KBAB4) (Bacillus weihenstephanensis) protein is Large ribosomal subunit protein uL24.